We begin with the raw amino-acid sequence, 104 residues long: Disrupted in renal carcinoma protein 1 (104 aa).

The disordered stretch occupies residues 1-23 (MPEAHMQPAKLQTSLPTTDHGSK). Over residues 10–19 (KLQTSLPTTD) the composition is skewed to polar residues.

In terms of tissue distribution, expressed at low steady-state level in adult placenta, testis, ovary, prostate, fetal kidney, spleen and skeletal muscle.

This Homo sapiens (Human) protein is Disrupted in renal carcinoma protein 1 (DIRC1).